The primary structure comprises 354 residues: MTALKNDRFLRALLKQPVDVTPVWMMRQAGRYLPEYRASRAKAGDFMSLCMNPQFACEVTLQPLDRYPLDAAILFSDILTIPDAMGQGLYFETGEGPRFKKVISTLADIEALPIPDPQKDLGYVMDAVSTIRRELNGRVPLIGFSGSPWTLATYMVEGGSSKDFRKTKAMAYDNPQALHLLLDKLAQSVTSYLNGQILAGAQAVQIFDTWGGNLSAAAYQEFSLAYMRKIVSGLIREHEGRKVPVILFTKNGGLWLESIAEAGADALGLDWTCEIGDARRRVGDKVALQGNMDPTVLYAKPEAIRKEVARILASYGKGSGHVFNLGHGITPEVDPEHAGVFINAVHELSAQYHQ.

Substrate contacts are provided by residues 27 to 31, aspartate 77, tyrosine 154, threonine 209, and histidine 327; that span reads RQAGR.

It belongs to the uroporphyrinogen decarboxylase family. As to quaternary structure, homodimer.

The protein resides in the cytoplasm. The enzyme catalyses uroporphyrinogen III + 4 H(+) = coproporphyrinogen III + 4 CO2. The protein operates within porphyrin-containing compound metabolism; protoporphyrin-IX biosynthesis; coproporphyrinogen-III from 5-aminolevulinate: step 4/4. Its function is as follows. Catalyzes the decarboxylation of four acetate groups of uroporphyrinogen-III to yield coproporphyrinogen-III. The sequence is that of Uroporphyrinogen decarboxylase from Pseudomonas entomophila (strain L48).